The sequence spans 262 residues: Probable proteasome subunit beta type-7 (262 aa).

Belongs to the peptidase T1B family. As to quaternary structure, the 26S proteasome consists of a 20S proteasome core and two 19S regulatory subunits. The 20S proteasome core is composed of 28 subunits that are arranged in four stacked rings, resulting in a barrel-shaped structure. The two end rings are each formed by seven alpha subunits, and the two central rings are each formed by seven beta subunits. The catalytic chamber with the active sites is on the inside of the barrel.

The protein resides in the cytoplasm. The protein localises to the nucleus. Functionally, non-catalytic component of the proteasome, a multicatalytic proteinase complex which is characterized by its ability to cleave peptides with Arg, Phe, Tyr, Leu, and Glu adjacent to the leaving group at neutral or slightly basic pH. The proteasome has an ATP-dependent proteolytic activity. The chain is Probable proteasome subunit beta type-7 from Schizosaccharomyces pombe (strain 972 / ATCC 24843) (Fission yeast).